A 167-amino-acid chain; its full sequence is Novel acetylcholine receptor chaperone (167 aa).

Topologically, residues 1-5 (MASPR) are cytoplasmic. A helical transmembrane segment spans residues 6–26 (TITIMALSVALGLFFVFMGTI). The Lumenal segment spans residues 27–61 (KLTPRLSKDAYSEMKRAYKSYVRALPLLKKMGINS). Residues 43-54 (AYKSYVRALPLL) are interaction with NGFR. The helical transmembrane segment at 62–82 (ILLRKSIGALEVACGIVMTLV) threads the bilayer. At 83–88 (PGRPKD) the chain is on the cytoplasmic side. The helical transmembrane segment at 89–109 (VANFFLLLLVLAVLFFHQLVG) threads the bilayer. Over 110–114 (DPLKR) the chain is Lumenal. A helical transmembrane segment spans residues 115–132 (YAHALVFGILLTCRLLIA). The Cytoplasmic portion of the chain corresponds to 133-167 (RKPEDRSSEKKALPESAEEQPSLYEKAPQGKVKVS). Residues 135-145 (PEDRSSEKKAL) are compositionally biased toward basic and acidic residues. The interval 135-167 (PEDRSSEKKALPESAEEQPSLYEKAPQGKVKVS) is disordered.

This sequence belongs to the DoxX family. As to quaternary structure, may interact with NGFR. Interacts with RPN1, RPN2 and CANX. In terms of tissue distribution, brain (at protein level). Expressed in the spinal cord dorsal horn (at protein level).

The protein resides in the peroxisome membrane. The protein localises to the cytoplasmic vesicle. Its subcellular location is the endoplasmic reticulum membrane. In terms of biological role, molecular chaperone which mediates the proper assembly and functional expression of the nicotinic acetylcholine receptors (nAChRs) throughout the brain. Essential for the proper folding, assembly, function and surface trafficking of alpha-7 (CHRNA7), alpha-4-beta-2, alpha-3-beta-2 and alpha-3-beta-4 receptors. Stably associates with ribophorin-1 (RPN1) and ribophorin-2 (RPN2) (components of the oligosaccharyl transferase (OST) complex) and with calnexin (CANX), both of which are critical for NACHO-mediated effects on CHRNA7 assembly and function. Facilitates the proper folding and assembly of alpha-6-beta-2 and alpha-6-beta-2-beta-3 receptors and acts at early stages of the nAChRs subunit assembly. Promotes the expression of the alpha-4(2):beta-2(3) stoichiometric form over the alpha-4(3):beta-2(2) form. This chain is Novel acetylcholine receptor chaperone, found in Mus musculus (Mouse).